Reading from the N-terminus, the 188-residue chain is Ribosome maturation factor RimM (188 aa).

The PRC barrel domain occupies 98–171 (EGEFFQGDLV…RIVIHPPEYV (74 aa)).

Belongs to the RimM family. Binds ribosomal protein uS19.

It is found in the cytoplasm. An accessory protein needed during the final step in the assembly of 30S ribosomal subunit, possibly for assembly of the head region. Essential for efficient processing of 16S rRNA. May be needed both before and after RbfA during the maturation of 16S rRNA. It has affinity for free ribosomal 30S subunits but not for 70S ribosomes. The chain is Ribosome maturation factor RimM from Myxococcus xanthus (strain DK1622).